We begin with the raw amino-acid sequence, 551 residues long: Frizzled-2 (551 aa).

An N-terminal signal peptide occupies residues methionine 1–glycine 26. At glutamate 27–arginine 231 the chain is on the extracellular side. Residues proline 33 to glutamine 152 enclose the FZ domain. 5 cysteine pairs are disulfide-bonded: cysteine 38/cysteine 99, cysteine 46/cysteine 92, cysteine 83/cysteine 120, cysteine 109/cysteine 149, and cysteine 113/cysteine 137. N-linked (GlcNAc...) asparagine glycosylation is present at asparagine 52. A glycan (N-linked (GlcNAc...) asparagine) is linked at asparagine 153. Residues isoleucine 232 to tyrosine 252 form a helical membrane-spanning segment. The Cytoplasmic segment spans residues leucine 253–proline 265. A helical transmembrane segment spans residues isoleucine 266–leucine 286. Over glycine 287–cysteine 313 the chain is Extracellular. Residues threonine 314 to leucine 334 form a helical membrane-spanning segment. At serine 335–glutamine 356 the chain is on the cytoplasmic side. The chain crosses the membrane as a helical span at residues tyrosine 357–glycine 377. At glutamine 378–glycine 400 the chain is on the extracellular side. The chain crosses the membrane as a helical span at residues phenylalanine 401–phenylalanine 421. Over valine 422–arginine 447 the chain is Cytoplasmic. The helical transmembrane segment at isoleucine 448 to tyrosine 468 threads the bilayer. Residues glutamate 469–threonine 505 lie on the Extracellular side of the membrane. The chain crosses the membrane as a helical span at residues valine 506 to tryptophan 526. At serine 527 to tryptophan 534 the chain is on the cytoplasmic side. A Lys-Thr-X-X-X-Trp motif, mediates interaction with the PDZ domain of Dvl family members motif is present at residues lysine 529–tryptophan 534. The PDZ-binding signature appears at threonine 549–valine 551.

This sequence belongs to the G-protein coupled receptor Fz/Smo family. Widely expressed, especially in the eye anlage, otic vesicle and developing somites.

It is found in the membrane. The protein resides in the cell membrane. In terms of biological role, receptor for Wnt proteins. Most of frizzled receptors are coupled to the beta-catenin canonical signaling pathway, which leads to the activation of disheveled proteins, inhibition of GSK-3 kinase, nuclear accumulation of beta-catenin and activation of Wnt target genes. A second signaling pathway involving PKC and calcium fluxes has been seen for some family members, but it is not yet clear if it represents a distinct pathway or if it can be integrated in the canonical pathway, as PKC seems to be required for Wnt-mediated inactivation of GSK-3 kinase. Both pathways seem to involve interactions with G-proteins. May be involved in transduction and intercellular transmission of polarity information during tissue morphogenesis and/or in differentiated tissues. The polypeptide is Frizzled-2 (fzd2) (Xenopus laevis (African clawed frog)).